Here is a 126-residue protein sequence, read N- to C-terminus: Ribosome-binding factor A (126 aa).

The protein belongs to the RbfA family. In terms of assembly, monomer. Binds 30S ribosomal subunits, but not 50S ribosomal subunits or 70S ribosomes.

It is found in the cytoplasm. One of several proteins that assist in the late maturation steps of the functional core of the 30S ribosomal subunit. Associates with free 30S ribosomal subunits (but not with 30S subunits that are part of 70S ribosomes or polysomes). Required for efficient processing of 16S rRNA. May interact with the 5'-terminal helix region of 16S rRNA. This chain is Ribosome-binding factor A, found in Nitrosospira multiformis (strain ATCC 25196 / NCIMB 11849 / C 71).